The following is a 184-amino-acid chain: 2-C-methyl-D-erythritol 2,4-cyclodiphosphate synthase (184 aa).

A divalent metal cation contacts are provided by aspartate 17 and histidine 19. 4-CDP-2-C-methyl-D-erythritol 2-phosphate is bound by residues aspartate 17 to histidine 19 and histidine 47 to serine 48. Histidine 55 contacts a divalent metal cation. Residues phenylalanine 74–aspartate 78, phenylalanine 152, and arginine 155 each bind 4-CDP-2-C-methyl-D-erythritol 2-phosphate.

It belongs to the IspF family. In terms of assembly, homotrimer. The cofactor is a divalent metal cation.

The catalysed reaction is 4-CDP-2-C-methyl-D-erythritol 2-phosphate = 2-C-methyl-D-erythritol 2,4-cyclic diphosphate + CMP. It participates in isoprenoid biosynthesis; isopentenyl diphosphate biosynthesis via DXP pathway; isopentenyl diphosphate from 1-deoxy-D-xylulose 5-phosphate: step 4/6. In terms of biological role, involved in the biosynthesis of isopentenyl diphosphate (IPP) and dimethylallyl diphosphate (DMAPP), two major building blocks of isoprenoid compounds. Catalyzes the conversion of 4-diphosphocytidyl-2-C-methyl-D-erythritol 2-phosphate (CDP-ME2P) to 2-C-methyl-D-erythritol 2,4-cyclodiphosphate (ME-CPP) with a corresponding release of cytidine 5-monophosphate (CMP). This chain is 2-C-methyl-D-erythritol 2,4-cyclodiphosphate synthase, found in Anaplasma marginale (strain St. Maries).